The sequence spans 395 residues: Ketol-acid reductoisomerase, mitochondrial (395 aa).

Residues 1 to 47 (MLRTQAARLICNSRVITAKRTFALATRAAAYSRPAARFVKPMITTRG) constitute a mitochondrion transit peptide. The KARI N-terminal Rossmann domain occupies 57–246 (VETVYERADW…AIGSGYVYQT (190 aa)). Residues 84 to 93 (GYGSQGYGQG), 108 to 113 (RKDGAS), and 146 to 150 (SDAAQ) each bind NADP(+). Residue His-171 is part of the active site. The 148-residue stretch at 247–394 (TFEREVNSDL…KEVRKLRPEN (148 aa)) folds into the KARI C-terminal knotted domain. Residues Asp-255, Glu-259, Glu-291, and Glu-295 each contribute to the Mg(2+) site. Ser-317 lines the substrate pocket. A Phosphoserine modification is found at Ser-355. Positions 363–395 (DYREKLEKELDTIRNMEIWKVGKEVRKLRPENQ) are hydrophilic.

It belongs to the ketol-acid reductoisomerase family. It depends on Mg(2+) as a cofactor.

The protein resides in the mitochondrion. The catalysed reaction is (2R)-2,3-dihydroxy-3-methylbutanoate + NADP(+) = (2S)-2-acetolactate + NADPH + H(+). It catalyses the reaction (2R,3R)-2,3-dihydroxy-3-methylpentanoate + NADP(+) = (S)-2-ethyl-2-hydroxy-3-oxobutanoate + NADPH + H(+). It participates in amino-acid biosynthesis; L-isoleucine biosynthesis; L-isoleucine from 2-oxobutanoate: step 2/4. It functions in the pathway amino-acid biosynthesis; L-valine biosynthesis; L-valine from pyruvate: step 2/4. Its function is as follows. Involved in the biosynthesis of branched-chain amino acids (BCAA). Catalyzes the second common step in the parallel biosynthesis of isoleucine and valine. Converts alpha-aceto-alpha-hydroxybutyrate (AHB) to alpha,beta-dihydroxy-beta-methylvalerate (DHMV) and alpha-acetolactate (AL) to alpha,beta-dihydroxy-isovalerate (DHV) in isoleucine and valine biosynthesis, respectively. This is Ketol-acid reductoisomerase, mitochondrial from Saccharomyces cerevisiae (strain ATCC 204508 / S288c) (Baker's yeast).